The sequence spans 390 residues: Phosphoglycerate kinase (390 aa).

Substrate contacts are provided by residues D21–N23, R36, H59–R62, R112, and R145. Residues K196, E317, and G343–T346 each bind ATP.

This sequence belongs to the phosphoglycerate kinase family. In terms of assembly, monomer.

The protein localises to the cytoplasm. The catalysed reaction is (2R)-3-phosphoglycerate + ATP = (2R)-3-phospho-glyceroyl phosphate + ADP. Its pathway is carbohydrate degradation; glycolysis; pyruvate from D-glyceraldehyde 3-phosphate: step 2/5. This chain is Phosphoglycerate kinase, found in Cellvibrio japonicus (strain Ueda107) (Pseudomonas fluorescens subsp. cellulosa).